The sequence spans 533 residues: Putative amidase C550.07 (533 aa).

Catalysis depends on charge relay system residues lysine 132 and serine 207. Serine 231 (acyl-ester intermediate) is an active-site residue.

The protein belongs to the amidase family.

It is found in the cytoplasm. The protein resides in the nucleus. The catalysed reaction is a monocarboxylic acid amide + H2O = a monocarboxylate + NH4(+). This chain is Putative amidase C550.07, found in Schizosaccharomyces pombe (strain 972 / ATCC 24843) (Fission yeast).